Reading from the N-terminus, the 119-residue chain is Protein TusC (119 aa).

It belongs to the DsrF/TusC family. As to quaternary structure, heterohexamer, formed by a dimer of trimers. The hexameric TusBCD complex contains 2 copies each of TusB, TusC and TusD. The TusBCD complex interacts with TusE.

The protein localises to the cytoplasm. In terms of biological role, part of a sulfur-relay system required for 2-thiolation of 5-methylaminomethyl-2-thiouridine (mnm(5)s(2)U) at tRNA wobble positions. The polypeptide is Protein TusC (Klebsiella pneumoniae (strain 342)).